The sequence spans 426 residues: Glutamate-1-semialdehyde 2,1-aminomutase (426 aa).

At lysine 265 the chain carries N6-(pyridoxal phosphate)lysine.

Belongs to the class-III pyridoxal-phosphate-dependent aminotransferase family. HemL subfamily. Homodimer. It depends on pyridoxal 5'-phosphate as a cofactor.

It is found in the cytoplasm. The catalysed reaction is (S)-4-amino-5-oxopentanoate = 5-aminolevulinate. Its pathway is porphyrin-containing compound metabolism; protoporphyrin-IX biosynthesis; 5-aminolevulinate from L-glutamyl-tRNA(Glu): step 2/2. The chain is Glutamate-1-semialdehyde 2,1-aminomutase from Halorhodospira halophila (strain DSM 244 / SL1) (Ectothiorhodospira halophila (strain DSM 244 / SL1)).